Reading from the N-terminus, the 738-residue chain is Catalase-peroxidase 2 (738 aa).

Positions M1–A26 are cleaved as a signal peptide. A cross-link (tryptophyl-tyrosyl-methioninium (Trp-Tyr) (with M-252)) is located at residues W104 to Y226. The active-site Proton acceptor is H105. A cross-link (tryptophyl-tyrosyl-methioninium (Tyr-Met) (with W-104)) is located at residues Y226–M252. H267 is a binding site for heme b.

The protein belongs to the peroxidase family. Peroxidase/catalase subfamily. As to quaternary structure, homodimer or homotetramer. The cofactor is heme b. Formation of the three residue Trp-Tyr-Met cross-link is important for the catalase, but not the peroxidase activity of the enzyme.

The catalysed reaction is H2O2 + AH2 = A + 2 H2O. The enzyme catalyses 2 H2O2 = O2 + 2 H2O. Functionally, bifunctional enzyme with both catalase and broad-spectrum peroxidase activity. The chain is Catalase-peroxidase 2 from Shewanella amazonensis (strain ATCC BAA-1098 / SB2B).